A 247-amino-acid chain; its full sequence is Geranylgeranylglyceryl phosphate synthase (247 aa).

2 residues coordinate Mg(2+): D24 and S53. Sn-glycerol 1-phosphate contacts are provided by residues 172–178, 203–204, and 225–226; these read YLEAGSG, GG, and GT.

Belongs to the GGGP/HepGP synthase family. Group II subfamily. Mg(2+) serves as cofactor.

Its subcellular location is the cytoplasm. The catalysed reaction is sn-glycerol 1-phosphate + (2E,6E,10E)-geranylgeranyl diphosphate = sn-3-O-(geranylgeranyl)glycerol 1-phosphate + diphosphate. It functions in the pathway membrane lipid metabolism; glycerophospholipid metabolism. In terms of biological role, prenyltransferase that catalyzes the transfer of the geranylgeranyl moiety of geranylgeranyl diphosphate (GGPP) to the C3 hydroxyl of sn-glycerol-1-phosphate (G1P). This reaction is the first ether-bond-formation step in the biosynthesis of archaeal membrane lipids. This chain is Geranylgeranylglyceryl phosphate synthase, found in Cenarchaeum symbiosum (strain A).